The chain runs to 167 residues: Novel acetylcholine receptor chaperone (167 aa).

Residues 1-5 are Cytoplasmic-facing; the sequence is MASPR. The helical transmembrane segment at 6-26 threads the bilayer; the sequence is TVTIVALSVALGLFFVFMGTI. Residues 27–61 lie on the Lumenal side of the membrane; that stretch reads KLTPRLSKDAYSEMKRAYKSYVRALPLLKKMGINS. Residues 43–54 are interaction with NGFR; the sequence is AYKSYVRALPLL. Residues 62-82 form a helical membrane-spanning segment; it reads ILLRKSIGALEVACGIVMTLV. Residues 83-88 are Cytoplasmic-facing; sequence PGRPKD. Residues 89–109 traverse the membrane as a helical segment; the sequence is VANFFLLLLVLAVLFFHQLVG. The Lumenal portion of the chain corresponds to 110 to 114; it reads DPLKR. The helical transmembrane segment at 115–132 threads the bilayer; the sequence is YAHALVFGILLTCRLLIA. The Cytoplasmic segment spans residues 133 to 167; that stretch reads RKPEDRSSEKKPLPGNAEEQPSLYEKAPQGKVKVS. Positions 136–167 are disordered; sequence EDRSSEKKPLPGNAEEQPSLYEKAPQGKVKVS.

Belongs to the DoxX family. As to quaternary structure, may interact with NGFR. Interacts with RPN1, RPN2 and CANX.

Its subcellular location is the peroxisome membrane. The protein localises to the cytoplasmic vesicle. It is found in the endoplasmic reticulum membrane. In terms of biological role, molecular chaperone which mediates the proper assembly and functional expression of the nicotinic acetylcholine receptors (nAChRs) throughout the brain. Essential for the proper folding, assembly, function and surface trafficking of alpha-7 (CHRNA7), alpha-4-beta-2, alpha-3-beta-2 and alpha-3-beta-4 receptors. Stably associates with ribophorin-1 (RPN1) and ribophorin-2 (RPN2) (components of the oligosaccharyl transferase (OST) complex) and with calnexin (CANX), both of which are critical for NACHO-mediated effects on CHRNA7 assembly and function. Facilitates the proper folding and assembly of alpha-6-beta-2 and alpha-6-beta-2-beta-3 receptors and acts at early stages of the nAChRs subunit assembly. Promotes the expression of the alpha-4(2):beta-2(3) stoichiometric form over the alpha-4(3):beta-2(2) form. In Macaca fascicularis (Crab-eating macaque), this protein is Novel acetylcholine receptor chaperone (TMEM35A).